Reading from the N-terminus, the 228-residue chain is 3,4-dihydroxy-2-butanone 4-phosphate synthase (228 aa).

D-ribulose 5-phosphate-binding positions include 37 to 38, Asp42, 150 to 154, and Glu174; these read RE and RRGHT. Mg(2+) is bound at residue Glu38. Mg(2+) is bound at residue His153.

Belongs to the DHBP synthase family. Homodimer. The cofactor is Mg(2+). Requires Mn(2+) as cofactor.

It carries out the reaction D-ribulose 5-phosphate = (2S)-2-hydroxy-3-oxobutyl phosphate + formate + H(+). Its pathway is cofactor biosynthesis; riboflavin biosynthesis; 2-hydroxy-3-oxobutyl phosphate from D-ribulose 5-phosphate: step 1/1. Functionally, catalyzes the conversion of D-ribulose 5-phosphate to formate and 3,4-dihydroxy-2-butanone 4-phosphate. The chain is 3,4-dihydroxy-2-butanone 4-phosphate synthase from Photobacterium profundum (strain SS9).